Consider the following 720-residue polypeptide: MDQKLSQLIEELTTSGESQLNAQKMKELKKICKSSEEQLSHAYRLLMTQLTQDHAEIRLSAFQIVDELFTRSHQFRVLLVSDFQEFLELTLGTDNDHPLPPPREAAQRLRQAAMQAVEGWNEKFGEAYKKLALGYHFLKHTKKVDFRDINVRTLAERKREEEKQKHLDKIHRESADRAKREMEEMSDEIGCCLTEVENCFRLLVPLDLGPYREDKFFGEASGIAEDHAPCAWSPDLATPRGSGLSGPQDEEQPCCSKDLVASAHHAGSAVGLKAPAPAATEDPCRDEDRHSEHSDPEDFLRSHGLGSHKYTLDVELPSDGLKVQENEDNLAVLHAARDSLKLIQNKFLPAVCSWVQRFTRAGIYSGHLKQAIDLKMELELALKKYEELNIEPGRGQRSRTEALEDSEEEDQDFVEVPEKEGYEPRIPDHLRAEYGLEPKAPLKTLEKHTAVCSVQERTRRRREEEASDPTSAAAQMLRLQDCLSSPSSSSTRGPLGPEEAQKQAERARAPMVPFGVDLCYWGQEQLTAGKILKSDSQHRFWKPHEVEEEVDSAHVSEMLHSRHITFSGKFEPVQHKCRALRPNGRLCERQDRLKCPFHGKIIPRDDKGQPLNPEDRAREQRQQLQQQRAHPDWQDPEFMKDVEAATGVDLGSSKYSKKGKGKKKKHPNLTDLRERANTARARLEKKVFAKGAVQRVVAAMNQMDQKKHEKFANQFNYALK.

The tract at residues 2-145 (DQKLSQLIEE…HFLKHTKKVD (144 aa)) is VHS-like. Residues 169–198 (KIHRESADRAKREMEEMSDEIGCCLTEVEN) adopt a coiled-coil conformation. Disordered stretches follow at residues 234 to 253 (PDLA…EEQP), 269 to 304 (AVGL…RSHG), and 392 to 415 (PGRG…DFVE). The span at 282–301 (DPCRDEDRHSEHSDPEDFLR) shows a compositional bias: basic and acidic residues. Ser294 and Ser406 each carry phosphoserine. The span at 403–415 (LEDSEEEDQDFVE) shows a compositional bias: acidic residues. Lys419 is covalently cross-linked (Glycyl lysine isopeptide (Lys-Gly) (interchain with G-Cter in ubiquitin)). A disordered region spans residues 451–507 (VCSVQERTRRRREEEASDPTSAAAQMLRLQDCLSSPSSSSTRGPLGPEEAQKQAERA). A UVSSA-type zinc finger spans residues 574-601 (QHKCRALRPNGRLCERQDRLKCPFHGKI). Residues Cys577, Cys587, Cys595, and His598 each contribute to the Zn(2+) site. Disordered regions lie at residues 598–637 (HGKI…QDPE) and 649–669 (DLGS…HPNL). Over residues 602 to 621 (IPRDDKGQPLNPEDRAREQR) the composition is skewed to basic and acidic residues. Residues 655 to 667 (YSKKGKGKKKKHP) are compositionally biased toward basic residues.

This sequence belongs to the UVSSA family. Interacts with the elongating form of RNA polymerase II (RNA pol IIo) during transcription stress. Interacts with the TFIIH complex during transcription stress. Interacts with ERCC6. Interacts with ERCC8. Interacts with USP7. Post-translationally, monoubiquitinated at Lys-419 in response to transcription stress; this promotes efficient transfer of TFIIH to stalled RNA polymerase II.

It is found in the chromosome. Its function is as follows. Factor involved in transcription-coupled nucleotide excision repair (TC-NER), a mechanism that rapidly removes RNA polymerase II-blocking lesions from the transcribed strand of active genes. Acts as a key adapter that promotes recruitment of factors involved in TC-NER. Facilitates the ubiquitination of the elongating form of RNA polymerase II (RNA pol IIo) at DNA damage sites, thereby promoting RNA pol IIo backtracking and access by the TC-NER machinery to lesion sites. Also promotes stabilization of ERCC6/CSB by recruiting deubiquitinating enzyme USP7 to TC-NER complexes, preventing UV-induced degradation of ERCC6 by the proteasome. Mediates the recruitment of the TFIIH complex and other factors that are required for nucleotide excision repair to RNA polymerase II. Also required to inactivate stalled RNA polymerase II by blocking the access of TCEA1/TFIIS, thereby preventing reactivation of RNA polymerase II. Not involved in processing oxidative damage. The sequence is that of UV-stimulated scaffold protein A (Uvssa) from Rattus norvegicus (Rat).